Consider the following 605-residue polypeptide: MADPKGSTSKDGLDDWCIVEAECSDIENDLEELFDRDTDSDISELLDDNDDLDQGNSRELFHQQESKESEEHLQKLKRKYLSPQAIAQLSPRLESITLSPQQKSKRRLFAEQDSGLELTLTNEAEDVSSEVEVPALDSQPVAEAQIGTVDIHYTELLRASNNKAILMAKFKEAFGVGFNDLTRQFKSYKTCCNHWVLSVYAVHDDLLESSKKLLQQHCDYVWIRGIAAMSLFLLCFKVGKNRGTVHKLMTSMLNVHEKQILSEPPKLRNVAAALFWYKGAMGSGTFTYGPYPDWMAHQTIVGHQSTEANAFDMSVMVQWAFDNNYLDEADIAYQYAKLAPEDSNAVAWLAHNNQARFVRECASMVRFYKKGQMKEMSMSEWIHTRITEVEGEGHWSTIAKFLRYQQVNFIMFLAALKDMLHSVPKRNCILIYGPPNTGKSAFTMSLIRVLRGRVLSFVNSKSQFWLQPMSECKIALIDDVTDPCWLYMDTYLRNGLDGHYVSLDCKHKAPIQTKFPALLLTSNINVHNEITYRYLHSRIKGFEFPNPFPMKADNTPEFELTDQSWKSFFTRLWNQLELSDQEDEGDNGESQRPFQCSARSANEHL.

A Nuclear localization signal motif is present at residues 77 to 79 (KRK). Ser-82 and Ser-90 each carry phosphoserine; by host. The short motif at 89–98 (LSPRLESITL) is the Nuclear export signal element. The interval 145–308 (QIGTVDIHYT…TIVGHQSTEA (164 aa)) is DNA-binding region. Positions 407–557 (VNFIMFLAAL…FPMKADNTPE (151 aa)) constitute an SF3 helicase domain. Residue 433 to 440 (GPPNTGKS) coordinates ATP. Lys-514 is covalently cross-linked (Glycyl lysine isopeptide (Lys-Gly) (interchain with G-Cter in SUMO)). The disordered stretch occupies residues 580–605 (DQEDEGDNGESQRPFQCSARSANEHL). The segment covering 588 to 605 (GESQRPFQCSARSANEHL) has biased composition (polar residues).

This sequence belongs to the papillomaviridae E1 protein family. In terms of assembly, can form hexamers. Interacts with E2 protein; this interaction increases E1 DNA binding specificity. Interacts with host DNA polymerase subunit POLA2. Interacts with host single stranded DNA-binding protein RPA1. Interacts with host TOP1; this interaction stimulates the enzymatic activity of TOP1. Post-translationally, phosphorylated. In terms of processing, sumoylated.

It localises to the host nucleus. It carries out the reaction Couples ATP hydrolysis with the unwinding of duplex DNA by translocating in the 3'-5' direction.. The enzyme catalyses ATP + H2O = ADP + phosphate + H(+). In terms of biological role, ATP-dependent DNA 3'-5' helicase required for initiation of viral DNA replication. It forms a complex with the viral E2 protein. The E1-E2 complex binds to the replication origin which contains binding sites for both proteins. During the initial step, a dimer of E1 interacts with a dimer of protein E2 leading to a complex that binds the viral origin of replication with high specificity. Then, a second dimer of E1 displaces the E2 dimer in an ATP-dependent manner to form the E1 tetramer. Following this, two E1 monomers are added to each half of the site, which results in the formation of two E1 trimers on the viral ori. Subsequently, two hexamers will be created. The double hexamer acts as a bi-directional helicase machinery and unwinds the viral DNA and then recruits the host DNA polymerase to start replication. This Homo sapiens (Human) protein is Replication protein E1.